Reading from the N-terminus, the 324-residue chain is Protein FAM228B (324 aa).

It belongs to the FAM228 family.

The sequence is that of Protein FAM228B (FAM228B) from Homo sapiens (Human).